The following is a 350-amino-acid chain: Blue-sensitive opsin (350 aa).

At 1–36 (MNGTEGPNFYVPMSNATGVVRSPFEYPQYYLAEPWA) the chain is on the extracellular side. N-linked (GlcNAc...) asparagine glycosylation is found at Asn2 and Asn15. The chain crosses the membrane as a helical span at residues 37-61 (FSILAAYMFFLIITGFPINFLTLYV). At 62 to 73 (TIEHKKLRTPLN) the chain is on the cytoplasmic side. Residues 74-98 (YILLNLAVADLFMVFGGFTTTMYTS) traverse the membrane as a helical segment. The Extracellular portion of the chain corresponds to 99–113 (MHGYFVFGETGCNLE). A disulfide bridge connects residues Cys110 and Cys187. A helical membrane pass occupies residues 114-133 (GYFATLGGEISLWSLVVLAI). Over 134-152 (ERWVVVCKPISNFRFGENH) the chain is Cytoplasmic. Residues 153 to 176 (AIMGLTLTWVMANACAMPPLFGWS) form a helical membrane-spanning segment. Residues 177–202 (RYIPEGLQCSCGIDYYTLKPEVNNES) lie on the Extracellular side of the membrane. Asn200 carries N-linked (GlcNAc...) asparagine glycosylation. A helical transmembrane segment spans residues 203–230 (FVIYMFLVHFTIPLTIISFCYGRLVCAV). Over 231–252 (KEAAAQQQESETTQRAEREVTR) the chain is Cytoplasmic. The helical transmembrane segment at 253 to 276 (MVVIMVISFLVCWIPYASVAWYIF) threads the bilayer. The Extracellular portion of the chain corresponds to 277-284 (THQGSTFG). The helical transmembrane segment at 285–309 (PIFMTVPSFFAKSSSIYNPMIYICM) threads the bilayer. An N6-(retinylidene)lysine modification is found at Lys296. Residues 310-350 (NKQFRNCMITTLFCGKNPFEGEEEGSTTKTEASAVSSVSPA) lie on the Cytoplasmic side of the membrane. The tract at residues 330 to 350 (GEEEGSTTKTEASAVSSVSPA) is disordered.

The protein belongs to the G-protein coupled receptor 1 family. Opsin subfamily. Post-translationally, phosphorylated on some or all of the serine and threonine residues present in the C-terminal region. Rod shaped photoreceptor cells which mediates vision in dim light.

It localises to the membrane. Functionally, visual pigments are the light-absorbing molecules that mediate vision. They consist of an apoprotein, opsin, covalently linked to cis-retinal. The chain is Blue-sensitive opsin from Conger conger (Conger eel).